The following is an 858-amino-acid chain: Envelope glycoprotein gp160 (858 aa).

An N-terminal signal peptide occupies residues 1 to 19 (MMNQLLIAILLASACLVYC). Over 20 to 679 (TQYVTVFYGV…LTSWVKYIQY (660 aa)) the chain is Extracellular. A glycan (N-linked (GlcNAc...) asparagine; by host) is linked at asparagine 34. The cysteines at positions 41 and 54 are disulfide-linked. 26 N-linked (GlcNAc...) asparagine; by host glycosylation sites follow: asparagine 67, asparagine 76, asparagine 119, asparagine 120, asparagine 151, asparagine 166, asparagine 179, asparagine 192, asparagine 193, asparagine 196, asparagine 206, asparagine 238, asparagine 241, asparagine 248, asparagine 272, asparagine 278, asparagine 289, asparagine 300, asparagine 310, asparagine 367, asparagine 371, asparagine 400, asparagine 410, asparagine 447, asparagine 463, and asparagine 466. 5 disulfide bridges follow: cysteine 98/cysteine 214, cysteine 105/cysteine 205, cysteine 110/cysteine 163, cysteine 227/cysteine 257, and cysteine 237/cysteine 249. The V1 stretch occupies residues 110–162 (CSSTESSTGNNTTSKSTSTTTTTPTDQEQEISEDTPCARADNCSGLGEEETIN). The segment covering 111–134 (SSTESSTGNNTTSKSTSTTTTTPT) has biased composition (low complexity). Residues 111–142 (SSTESSTGNNTTSKSTSTTTTTPTDQEQEISE) form a disordered region. Positions 163 to 205 (CQFNMTGLERDKKKQYNETWYSKDVVCETNNSTNQTQCYMNHC) are V2. A V3 region spans residues 305–339 (CKRPGNKTVKQIMLMSGHVFHSHYQPINKRPRQAW). An intrachain disulfide couples cysteine 305 to cysteine 340. 2 disulfide bridges follow: cysteine 392–cysteine 446 and cysteine 399–cysteine 419. The interval 399 to 419 (CNMTWFLNWIENKTHRNYAPC) is V4. A V5 region spans residues 462–469 (NNQTNITF). Positions 512 to 532 (GVFVLGFLGFLATAGSAMGAA) are fusion peptide. The immunosuppression stretch occupies residues 575-591 (LQARVTAIEKYLQDQAR). Asparagine 611, asparagine 620, and asparagine 636 each carry an N-linked (GlcNAc...) asparagine; by host glycan. Residues 624 to 645 (QEWEKQVRYLEANISKSLEQAQ) adopt a coiled-coil conformation. An MPER; binding to GalCer region spans residues 657–678 (KLNSWDIFGNWFDLTSWVKYIQ). Residues 680-700 (GVLIIVAVIALRIVIYVVQML) form a helical membrane-spanning segment. The Cytoplasmic segment spans residues 701–858 (SRLRKGYRPV…IRQGAEIALL (158 aa)). The short motif at 707 to 710 (YRPV) is the YXXV motif; contains endocytosis signal element. The S-palmitoyl cysteine; by host moiety is linked to residue cysteine 773. The Di-leucine internalization motif motif lies at 857–858 (LL).

As to quaternary structure, the mature envelope protein (Env) consists of a homotrimer of non-covalently associated gp120-gp41 heterodimers. The resulting complex protrudes from the virus surface as a spike. There seems to be as few as 10 spikes on the average virion. Interacts with human CD4, CCR5 and CXCR4, to form a P4HB/PDI-CD4-CXCR4-gp120 complex. Gp120 also interacts with the C-type lectins CD209/DC-SIGN and CLEC4M/DC-SIGNR (collectively referred to as DC-SIGN(R)). Gp120 and gp41 interact with GalCer. In terms of assembly, the mature envelope protein (Env) consists of a homotrimer of non-covalently associated gp120-gp41 heterodimers. The resulting complex protrudes from the virus surface as a spike. There seems to be as few as 10 spikes on the average virion. Specific enzymatic cleavages in vivo yield mature proteins. Envelope glycoproteins are synthesized as an inactive precursor that is heavily N-glycosylated and processed likely by host cell furin in the Golgi to yield the mature SU and TM proteins. The cleavage site between SU and TM requires the minimal sequence [KR]-X-[KR]-R. In terms of processing, palmitoylation of the transmembrane protein and of Env polyprotein (prior to its proteolytic cleavage) is essential for their association with host cell membrane lipid rafts. Palmitoylation is therefore required for envelope trafficking to classical lipid rafts, but not for viral replication.

The protein localises to the virion membrane. Its subcellular location is the host cell membrane. It is found in the host endosome membrane. In terms of biological role, the surface protein gp120 (SU) attaches the virus to the host lymphoid cell by binding to the primary receptor CD4. This interaction induces a structural rearrangement creating a high affinity binding site for a chemokine coreceptor like CXCR4 and/or CCR5. This peculiar 2 stage receptor-interaction strategy allows gp120 to maintain the highly conserved coreceptor-binding site in a cryptic conformation, protected from neutralizing antibodies. Since CD4 also displays a binding site for the disulfide-isomerase P4HB/PDI, a P4HB/PDI-CD4-CXCR4-gp120 complex may form. In that complex, P4HB/PDI could reach and reduce gp120 disulfide bonds, causing major conformational changes in gp120. TXN, another PDI family member could also be involved in disulfide rearrangements in Env during fusion. These changes are transmitted to the transmembrane protein gp41 and are thought to activate its fusogenic potential by unmasking its fusion peptide. Its function is as follows. The surface protein gp120 is a ligand for CD209/DC-SIGN and CLEC4M/DC-SIGNR, which are respectively found on dendritic cells (DCs), and on endothelial cells of liver sinusoids and lymph node sinuses. These interactions allow capture of viral particles at mucosal surfaces by these cells and subsequent transmission to permissive cells. DCs are professional antigen presenting cells, critical for host immunity by inducing specific immune responses against a broad variety of pathogens. They act as sentinels in various tissues where they take up antigen, process it, and present it to T-cells following migration to lymphoid organs. HIV subverts the migration properties of dendritic cells to gain access to CD4+ T-cells in lymph nodes. Virus transmission to permissive T-cells occurs either in trans (without DCs infection, through viral capture and transmission), or in cis (following DCs productive infection, through the usual CD4-gp120 interaction), thereby inducing a robust infection. In trans infection, bound virions remain infectious over days and it is proposed that they are not degraded, but protected in non-lysosomal acidic organelles within the DCs close to the cell membrane thus contributing to the viral infectious potential during DCs' migration from the periphery to the lymphoid tissues. On arrival at lymphoid tissues, intact virions recycle back to DCs' cell surface allowing virus transmission to CD4+ T-cells. Virion capture also seems to lead to MHC-II-restricted viral antigen presentation, and probably to the activation of HIV-specific CD4+ cells. The transmembrane protein gp41 (TM) acts as a class I viral fusion protein. Under the current model, the protein has at least 3 conformational states: pre-fusion native state, pre-hairpin intermediate state, and post-fusion hairpin state. During fusion of viral and target intracellular membranes, the coiled coil regions (heptad repeats) assume a trimer-of-hairpins structure, positioning the fusion peptide in close proximity to the C-terminal region of the ectodomain. The formation of this structure appears to drive apposition and subsequent fusion of viral and target cell membranes. Complete fusion occurs in host cell endosomes and is dynamin-dependent, however some lipid transfer might occur at the plasma membrane. The virus undergoes clathrin-dependent internalization long before endosomal fusion, thus minimizing the surface exposure of conserved viral epitopes during fusion and reducing the efficacy of inhibitors targeting these epitopes. Membranes fusion leads to delivery of the nucleocapsid into the cytoplasm. Functionally, the envelope glycoprotein gp160 precursor down-modulates cell surface CD4 antigen by interacting with it in the endoplasmic reticulum and blocking its transport to the cell surface. In terms of biological role, the gp120-gp41 heterodimer seems to contribute to T-cell depletion during HIV-1 infection. The envelope glycoproteins expressed on the surface of infected cells induce apoptosis through an interaction with uninfected cells expressing the receptor (CD4) and the coreceptors CXCR4 or CCR5. This type of bystander killing may be obtained by at least three distinct mechanisms. First, the interaction between the 2 cells can induce cellular fusion followed by nuclear fusion within the syncytium. Syncytia are condemned to die from apoptosis. Second, the 2 interacting cells may not fuse entirely and simply exchange plasma membrane lipids, after a sort of hemifusion process, followed by rapid death. Third, it is possible that virus-infected cells, on the point of undergoing apoptosis, fuse with CD4-expressing cells, in which case apoptosis is rapidly transmitted from one cell to the other and thus occurs in a sort of contagious fashion. Its function is as follows. The gp120-gp41 heterodimer allows rapid transcytosis of the virus through CD4 negative cells such as simple epithelial monolayers of the intestinal, rectal and endocervical epithelial barriers. Both gp120 and gp41 specifically recognize glycosphingolipids galactosyl-ceramide (GalCer) or 3' sulfo-galactosyl-ceramide (GalS) present in the lipid rafts structures of epithelial cells. Binding to these alternative receptors allows the rapid transcytosis of the virus through the epithelial cells. This transcytotic vesicle-mediated transport of virions from the apical side to the basolateral side of the epithelial cells does not involve infection of the cells themselves. This chain is Envelope glycoprotein gp160 (env), found in Homo sapiens (Human).